Consider the following 260-residue polypeptide: Caveolae-associated protein 3 (260 aa).

The segment at 1–84 (MGESALESGP…SNTLAQLLAK (84 aa)) is interaction with CAVIN1. The leucine-zipper stretch occupies residues 20-78 (VHAVTVVTLLEKLATMLETLRERQGGLAQRQGGLAGSVRRIQSNLGALSRSHDTTSNTL). Residues S62 and S70 each carry the phosphoserine modification. Residue K128 forms a Glycyl lysine isopeptide (Lys-Gly) (interchain with G-Cter in SUMO2) linkage. Residues 135-201 (AKAFQKAPEP…SGRKGHAAPT (67 aa)) form an interaction with CAV1 region. The segment at 140 to 260 (KAPEPLGPVE…AAVLQVESAA (121 aa)) is disordered. Residues 157–168 (AEAEESSDEEEP) show a composition bias toward acidic residues. 3 positions are modified to phosphoserine: S162, S163, and S171. Residues 201–210 (TPTPVKPPRL) show a composition bias toward pro residues.

The protein belongs to the CAVIN family. As to quaternary structure, component of the CAVIN complex composed of CAVIN1, CAVIN2, CAVIN3 and CAVIN4. Interacts with PRKCD and with phosphatidylserine. Phosphatidylserine may form a bridge between PKC and PKC-binding partners and stabilize the binding. Interacts with PER2. Interacts with CAVIN1 and EPS15L1. Interacts (via leucine-zipper domain) with CAV1 in a cholesterol-sensitive manner. In terms of processing, in vitro, phosphorylated by PRKCD.

It is found in the cytoplasm. The protein resides in the membrane. The protein localises to the caveola. Its subcellular location is the cytosol. Functionally, regulates the traffic and/or budding of caveolae. Plays a role in caveola formation in a tissue-specific manner. Required for the formation of caveolae in smooth muscle but not in the lung and heart endothelial cells. Regulates the equilibrium between cell surface-associated and cell surface-dissociated caveolae by promoting the rapid release of caveolae from the cell surface. Plays a role in the regulation of the circadian clock. Modulates the period length and phase of circadian gene expression and also regulates expression and interaction of the core clock components PER1/2 and CRY1/2. The polypeptide is Caveolae-associated protein 3 (CAVIN3) (Bos taurus (Bovine)).